Reading from the N-terminus, the 2472-residue chain is Nuclear receptor corepressor 2 (2472 aa).

3 disordered regions span residues 1–20 (MSGS…PRYP), 47–168 (RDYT…SRLS), and 190–220 (ISKL…PPIE). Asymmetric dimethylarginine is present on Arg18. Residues 51–60 (SHLSPGSIIQ) are compositionally biased toward polar residues. Residues Ser54 and Ser67 each carry the phosphoserine modification. 2 stretches are compositionally biased toward basic and acidic residues: residues 78 to 88 (RSQELHLRPES) and 96 to 112 (GKPD…RLEL). Residues Ser149 and Ser152 each carry the phosphoserine modification. Residues 165-207 (SRLSKEELIQNMDRVDREITMVEQQISKLKKKQQQLEEEAAKP) adopt a coiled-coil conformation. Over residues 203-212 (EAAKPPEPEK) the composition is skewed to basic and acidic residues. Ser215 bears the Phosphoserine mark. The interval 254–312 (LPLYNQPSDTRQYHENIKINQAMRKKLILYFKRRNHARKQWEQRFCQRYDQLMEAWEKK) is interaction with SIN3A/B. The deacetylase activation domain (DAD) stretch occupies residues 389–480 (MRQLAVIPPM…YLTKKNENYK (92 aa)). The region spanning 427–478 (QVTNMWSEQERDTFREKFMQHPKNFGLIASFLERKTVAECVLYYYLTKKNEN) is the SANT 1 domain. Residues Lys449, Tyr470, and Tyr471 each coordinate 1D-myo-inositol 1,4,5,6-tetrakisphosphate. Disordered regions lie at residues 487-618 (YRRR…EMET), 665-1107 (HKLK…RPPI), and 1173-1197 (SATS…YRGS). Residues 492–560 (KSQQQQQQQQ…GEDNDEKEAV (69 aa)) are a coiled coil. Ser493 bears the Phosphoserine mark. Positions 494 to 507 (QQQQQQQQQQQQQQ) are enriched in low complexity. Residues 512–548 (SQEEKEEKEKEKEADKEEEKQDAENEKEELSKEKTDD) are compositionally biased toward basic and acidic residues. At Thr549 the chain carries Phosphothreonine. Ser550 carries the phosphoserine modification. Residues 592–609 (ATPQQSSELASMEMNESS) show a composition bias toward polar residues. The 52-residue stretch at 606-657 (NESSRWTEEEMETAKKGLLEHGRNWSAIARMVGSKTVSQCKNFYFNYKKRQN) folds into the SANT 2 domain. Residues 658-682 (LDEILQQHKLKMEKERNARRKKKKT) are a coiled coil. Residues 709 to 718 (NEEELAEEAE) are compositionally biased toward acidic residues. Positions 739–750 (VNNSSDTESVPS) are enriched in polar residues. Residues Ser747 and Ser750 each carry the phosphoserine modification. 2 stretches are compositionally biased toward pro residues: residues 773–782 (TQPPVPPPEE) and 789–811 (EPSP…PAAP). Composition is skewed to basic and acidic residues over residues 831 to 850 (EDAK…KPEE) and 859 to 868 (ESVKSDHKEE). An N6-acetyllysine modification is found at Lys878. Residues 905 to 919 (GSSSGATQDSDSSAT) show a composition bias toward low complexity. Ser938 is subject to Phosphoserine. Phosphothreonine is present on Thr945. Ser955 bears the Phosphoserine mark. An N6-acetyllysine modification is found at Lys958. Residues 978–988 (KVHEPPREDTV) show a composition bias toward basic and acidic residues. Positions 989–1000 (PPKPVPPVPPPT) are enriched in pro residues. The span at 1090–1101 (LPLGLHDSARPV) shows a compositional bias: low complexity. N6-acetyllysine occurs at positions 1181 and 1209. A Phosphoserine modification is found at Ser1220. Disordered stretches follow at residues 1254–1277 (SVSQ…AAPK), 1345–1378 (LKRE…LKLK), and 1410–1443 (PLAP…KHDV). Thr1350 is subject to Phosphothreonine. Positions 1359–1368 (DLTETYKPRP) are enriched in basic and acidic residues. Phosphoserine is present on residues Ser1449, Ser1509, and Ser1565. The disordered stretch occupies residues 1479-1578 (KSRSGTSSGA…TVPEHHPHPI (100 aa)). Residue Arg1624 is modified to Asymmetric dimethylarginine. Residues 1734–1826 (TAPPPFSSRH…PISPRTQDAL (93 aa)) are disordered. Positions 1740-1753 (SSRHSSSPLSPGGP) are enriched in low complexity. Phosphoserine occurs at positions 1746 and 1749. Residues 1765–1778 (SERERERERERDKS) show a composition bias toward basic and acidic residues. The segment covering 1807-1826 (RPASHTHQHSPISPRTQDAL) has biased composition (polar residues). Phosphoserine is present on Ser1819. Arg1854 carries the omega-N-methylarginine modification. Disordered regions lie at residues 1857–1878 (RSTS…THCP), 1898–1986 (KETS…KPFS), and 2001–2078 (AGYS…LQTA). Residues 1899–1913 (ETSRVARPERPRVDA) are compositionally biased toward basic and acidic residues. Lys1920 is subject to N6-acetyllysine. Residues 1925–1938 (EPASSPSKSSEPRS) show a composition bias toward low complexity. Position 1963 is a phosphoserine (Ser1963). The residue at position 1983 (Lys1983) is an N6-acetyllysine. A phosphoserine mark is found at Ser2004, Ser2012, Ser2015, Ser2016, and Ser2018. Thr2020 is subject to Phosphothreonine. Positions 2020-2043 (THDKGLSKPLEELEKSHLEGELRH) are enriched in basic and acidic residues. Ser2035 carries the phosphoserine modification. Positions 2064 to 2075 (LPESQPSSSPLL) are enriched in low complexity. Residues 2086–2090 (RVVTL) are required for interaction with RARA in the absence of its ligand. The CORNR box of ID1 motif lies at 2094-2098 (ISEVI). Residues 2132–2226 (RRPPSDLYLP…GNTSQPPAFF (95 aa)) form a disordered region. Residues Ser2161, Ser2181, and Ser2215 each carry the phosphoserine modification. Positions 2296-2300 (LEAII) match the CORNR box of ID2 motif. The disordered stretch occupies residues 2343 to 2459 (GRSDHALTSP…HHAWDEEPKP (117 aa)). Ser2371 carries the post-translational modification Phosphoserine. The span at 2439–2450 (LAAGSGPLAGPH) shows a compositional bias: low complexity.

This sequence belongs to the N-CoR nuclear receptor corepressors family. As to quaternary structure, forms a large corepressor complex that contains SIN3A/B and histone deacetylases HDAC1 and HDAC2. This complex associates with the thyroid (TR) and the retinoid acid receptors (RAR) in the absence of ligand, and may stabilize their interaction with TFIIB. Interacts directly with RARA in the absence of ligand; the interaction represses RARA activity. Interacts (isoform SMRT) with HDAC10. Interacts with MINT. Component of the N-Cor repressor complex, at least composed of NCOR1, NCOR2, HDAC3, TBL1X, TBL1R, CORO2A and GPS2. Interacts with CBFA2T3 and ATXN1L. Interacts with RARB; the interaction is weak and does not repress RARB transactivational activity. Interacts (via 1D-myo-inositol 1,4,5,6-tetrakisphosphate) with HDAC3; promoting the histone deacetylase activity of HDAC3. Interacts with HDAC7 and C1D. Interacts with NR4A2; this interaction increases in the absence of PITX3. Interacts with BCL6 (via the BTB domain), required for BCL6 transcriptional repressor activity on a subset of target genes. Forms ternary complexes with BCOR and BCL6 on target gene promoters but, on enhancer elements, interacts with BCL6 and HDAC3 to repress proximal gene expression. May interact with DEAF1. Interacts with RXRA. Interacts with MECP2. Interacts with ZBTB7A. Interacts with AR. Interacts with TBL1Y. Interacts with SANBR (via the BTB domain). In terms of tissue distribution, ubiquitous. Also widely expressed in early embryos.

It localises to the nucleus. Functionally, transcriptional corepressor that mediates the transcriptional repression activity of some nuclear receptors by promoting chromatin condensation, thus preventing access of the basal transcription. Acts by recruiting chromatin modifiers, such as histone deacetylases HDAC1, HDAC2 and HDAC3. Required to activate the histone deacetylase activity of HDAC3. Involved in the regulation BCL6-dependent of the germinal center (GC) reactions, mainly through the control of the GC B-cells proliferation and survival. Recruited by ZBTB7A to the androgen response elements/ARE on target genes, negatively regulates androgen receptor signaling and androgen-induced cell proliferation. The polypeptide is Nuclear receptor corepressor 2 (Ncor2) (Mus musculus (Mouse)).